A 785-amino-acid polypeptide reads, in one-letter code: Copal-8-ol diphosphate hydratase TPSSA3, chloroplastic (785 aa).

Residue R240 coordinates substrate. Residues D372 and D374 each contribute to the Mg(2+) site. Positions D372 to D375 match the DXDD motif motif. R459 contributes to the substrate binding site.

Belongs to the terpene synthase family. Requires Mg(2+) as cofactor.

It localises to the plastid. Its subcellular location is the chloroplast. It carries out the reaction (2E,6E,10E)-geranylgeranyl diphosphate + H2O = 8-hydroxycopalyl diphosphate. The protein operates within secondary metabolite biosynthesis; terpenoid biosynthesis. Involved in the biosynthesis of labdane-type diterpenoid including sclareol, a diterpene-diol that is used as fragrance and flavoring, and has anticancer effects (able to kill leukemic and colon cancer cells by apoptosis). Sclareol can also be used as synthesis precursor of ambergris substitution fragance products such as ambrox. Terpene synthase that produces 8-hydroxycopalyl diphosphate from geranylgeranyl diphosphate (GGPP). The protein is Copal-8-ol diphosphate hydratase TPSSA3, chloroplastic of Salvia sclarea (Clary sage).